The primary structure comprises 246 residues: Ribosome maturation factor RimM (246 aa).

Residues 1-15 (MKRKQESKGAGEKRQ) show a composition bias toward basic and acidic residues. The segment at 1-63 (MKRKQESKGA…NPQFTTPNPD (63 aa)) is disordered. Pro residues predominate over residues 45–54 (VPSPQSPIPN). A PRC barrel domain is found at 158–239 (GEDEYHVVDL…RIEITPPPGL (82 aa)).

Belongs to the RimM family. In terms of assembly, binds ribosomal protein uS19.

Its subcellular location is the cytoplasm. In terms of biological role, an accessory protein needed during the final step in the assembly of 30S ribosomal subunit, possibly for assembly of the head region. Essential for efficient processing of 16S rRNA. May be needed both before and after RbfA during the maturation of 16S rRNA. It has affinity for free ribosomal 30S subunits but not for 70S ribosomes. This is Ribosome maturation factor RimM from Nostoc sp. (strain PCC 7120 / SAG 25.82 / UTEX 2576).